A 692-amino-acid polypeptide reads, in one-letter code: MLRLPSSMPIVSFPANPNLLINPQPSWPSRRGNSAVVVSAASRDVDSFTSKSGYLFSLSADEADSLSEYNFPRIDGMYKKKPLILLRRLAQIGTTFSYWFGLRLADEALERSDQMFKVRAAELRKLLVELGPAYVKIAQAVSSRPDLIPPIYLDELSLLQDQITPFSTEVAFNMIEDELGLPIDELFSEISPEPVAAASLGQVYQARLRRSGKVVAVKVQRPGVRAAIALDTLILRYIAGLIKKAGRFNSDLEAVVDEWATSLFKEMDYLNEAQNGIKFRKLYGGIKDVLVPKMYTEYSTSKVLVMEWVEGQKLNEVNDLYLVEVGVYCSFNQLLEYGFYHADPHPGNFLRTYDGQLAYLDFGMMGDFRPELRDGFMEACLHLVNRDFKALAKDFVTLGLLPPTAEKSAVTKALTDVFQDAISRGVRNISFGDLLGDLGKTMYRFKFRIPPYFSLVIRSLAVLEGIAIGISPNYKVLGSTYPWIARKILTDSSPQLKSSLQNLLYEEGVFRIDRLESLLSESLRTETALVQKPVVGTESNIAMKQMLAFTFTEQGSFVREILLREFAKGLDAYGLATLDSFTFSGSGPSSSLTEEDMTNLRTFYRLISLFSGMQKAKSQVKAVSKYGEALTPLDEASLVMYQLPSAQEMLPILSILPELPQESQQRLLQLPGDLVGRLVTRAFARTIRRIFL.

The N-terminal 39 residues, methionine 1–serine 39, are a transit peptide targeting the chloroplast. In terms of domain architecture, Protein kinase spans glutamate 189–leucine 523. Residues valine 195–valine 203 and lysine 218 each bind ATP. The active-site Proton acceptor is the aspartate 343.

The protein belongs to the protein kinase superfamily. ADCK protein kinase family.

The protein resides in the plastid. It localises to the chloroplast. The protein localises to the plastoglobule. This is an uncharacterized protein from Arabidopsis thaliana (Mouse-ear cress).